The chain runs to 532 residues: Optineurin (532 aa).

Coiled coils occupy residues 27 to 143 (SMKN…LKLG) and 195 to 466 (EEVA…EEMM). The segment at 502-532 (QPSITVYTCPKCNLTVPDMDTLQIHVMDCIT) adopts a CCHC NOA-type zinc-finger fold. Zn(2+) is bound by residues Cys510, Cys513, His526, and Cys530.

It localises to the cytoplasm. Its subcellular location is the perinuclear region. The protein localises to the golgi apparatus. The protein resides in the trans-Golgi network. It is found in the cytoplasmic vesicle. It localises to the recycling endosome. Its subcellular location is the autophagosome. Functionally, probably part of the TNF-alpha signaling pathway that can shift the equilibrium toward induction of cell death. May act by regulating membrane trafficking and cellular morphogenesis. The protein is Optineurin (optn) of Xenopus laevis (African clawed frog).